The primary structure comprises 458 residues: Forkhead box protein J1-A (458 aa).

Over residues T68–S78 the composition is skewed to polar residues. The interval T68–M99 is disordered. Positions K142–L236 form a DNA-binding region, fork-head. Over residues T305–R321 the composition is skewed to basic residues. The interval T305–S324 is disordered.

It belongs to the FOXJ1 family. As to expression, expressed in floor plate, dorsal forerunner cells, Kupffers vesicle, the floor plate, pronephric ducts and kidney.

The protein resides in the nucleus. Functionally, key transcription factor required for motile ciliogenesis. Activates genes essential for motile cilia formation and function. Its activity is sufficient for ectopic development of cilia that resemble motile cilia. This is Forkhead box protein J1-A from Danio rerio (Zebrafish).